A 297-amino-acid chain; its full sequence is MMIKQYLQVTKPGIIFGNLISVIGGFLLAAKGQIDYALFLATLLGVSLVVASGCVFNNYIDRDIDRKMERTKNRVLVKGLISPKVSLVYATVLGIAGFALLYLAANPLAMWLAVMGFVVYVGVYSLYMKRKSVYGTLIGSLSGAAPPVIGYCAVSDGFDTGALILLLIFSLWQMPHSYAIAIFRFKDYQAASIPVLPVKRGISVTKHHITLYIIGFMVATLMLTLSGYAGYKYLIVAASVSVWWLGMALQGYKSANDDKVWARKLFIFSIVAINSLSVMMSVDFMVPSANNLLTYLG.

A run of 9 helical transmembrane segments spans residues 12–32 (PGII…AAKG), 36–56 (YALF…GCVF), 85–105 (VSLV…YLAA), 108–128 (LAMW…SLYM), 133–153 (VYGT…GYCA), 163–183 (LILL…IAIF), 209–229 (ITLY…SGYA), 230–250 (GYKY…MALQ), and 266–286 (FIFS…DFMV).

The protein belongs to the UbiA prenyltransferase family. Protoheme IX farnesyltransferase subfamily.

The protein resides in the cell inner membrane. The enzyme catalyses heme b + (2E,6E)-farnesyl diphosphate + H2O = Fe(II)-heme o + diphosphate. It functions in the pathway porphyrin-containing compound metabolism; heme O biosynthesis; heme O from protoheme: step 1/1. In terms of biological role, converts heme B (protoheme IX) to heme O by substitution of the vinyl group on carbon 2 of heme B porphyrin ring with a hydroxyethyl farnesyl side group. In Sodalis glossinidius (strain morsitans), this protein is Protoheme IX farnesyltransferase.